A 727-amino-acid chain; its full sequence is DNA ligase (727 aa).

NAD(+)-binding positions include 71 to 75 (DGEFD), 120 to 121 (SL), and glutamate 150. Residue lysine 152 is the N6-AMP-lysine intermediate of the active site. Residues arginine 173, glutamate 213, lysine 329, and lysine 353 each coordinate NAD(+). Residues cysteine 447, cysteine 450, cysteine 466, and cysteine 472 each contribute to the Zn(2+) site. Residues 636-725 (SIERHLTGLS…PEAAAEAALP (90 aa)) enclose the BRCT domain.

Belongs to the NAD-dependent DNA ligase family. LigA subfamily. Mg(2+) serves as cofactor. Requires Mn(2+) as cofactor.

It carries out the reaction NAD(+) + (deoxyribonucleotide)n-3'-hydroxyl + 5'-phospho-(deoxyribonucleotide)m = (deoxyribonucleotide)n+m + AMP + beta-nicotinamide D-nucleotide.. Functionally, DNA ligase that catalyzes the formation of phosphodiester linkages between 5'-phosphoryl and 3'-hydroxyl groups in double-stranded DNA using NAD as a coenzyme and as the energy source for the reaction. It is essential for DNA replication and repair of damaged DNA. The polypeptide is DNA ligase (Saccharopolyspora erythraea (strain ATCC 11635 / DSM 40517 / JCM 4748 / NBRC 13426 / NCIMB 8594 / NRRL 2338)).